The primary structure comprises 671 residues: UvrABC system protein B (671 aa).

One can recognise a Helicase ATP-binding domain in the interval 25–412; it reads EGIEAGLAHQ…AGRVVEQVVR (388 aa). 38–45 contributes to the ATP binding site; the sequence is GVTGSGKT. The Beta-hairpin motif lies at 91–114; it reads YYDYYQPEAYVPSSDTFIEKDASI. The Helicase C-terminal domain maps to 429–582; it reads QVDDLLSEIT…QIAFNLANGI (154 aa). Residues 601-623 are disordered; that stretch reads PGSRSKKRKGMAKAAEENARYEN. Positions 614 to 623 are enriched in basic and acidic residues; it reads AAEENARYEN. The region spanning 632 to 667 is the UVR domain; the sequence is TKRIRQLEEKMYQLARDLEFEAAAQMRDEITKLRER.

The protein belongs to the UvrB family. As to quaternary structure, forms a heterotetramer with UvrA during the search for lesions. Interacts with UvrC in an incision complex.

It is found in the cytoplasm. The UvrABC repair system catalyzes the recognition and processing of DNA lesions. A damage recognition complex composed of 2 UvrA and 2 UvrB subunits scans DNA for abnormalities. Upon binding of the UvrA(2)B(2) complex to a putative damaged site, the DNA wraps around one UvrB monomer. DNA wrap is dependent on ATP binding by UvrB and probably causes local melting of the DNA helix, facilitating insertion of UvrB beta-hairpin between the DNA strands. Then UvrB probes one DNA strand for the presence of a lesion. If a lesion is found the UvrA subunits dissociate and the UvrB-DNA preincision complex is formed. This complex is subsequently bound by UvrC and the second UvrB is released. If no lesion is found, the DNA wraps around the other UvrB subunit that will check the other stand for damage. This is UvrABC system protein B from Pseudomonas fluorescens (strain ATCC BAA-477 / NRRL B-23932 / Pf-5).